The chain runs to 516 residues: Replication factor C large subunit (516 aa).

ATP is bound at residue 44 to 51 (GAPGVGKT). The disordered stretch occupies residues 421–516 (RSEAVEAHAG…DGQAGLSEFM (96 aa)). Basic and acidic residues predominate over residues 454-467 (VQSHKSAESGDDTV). Residues 479-496 (QSGASETASATESASDSD) show a composition bias toward low complexity. Acidic residues predominate over residues 497–508 (ASTDTDADDDDG).

It belongs to the activator 1 small subunits family. RfcL subfamily. As to quaternary structure, heteromultimer composed of small subunits (RfcS) and large subunits (RfcL).

Part of the RFC clamp loader complex which loads the PCNA sliding clamp onto DNA. This chain is Replication factor C large subunit, found in Haloquadratum walsbyi (strain DSM 16790 / HBSQ001).